Reading from the N-terminus, the 276-residue chain is MIREWQVLTTERMEPALNMAIDEALIGFVGRGEVAPTLRFYSWEPRGLSVGHFQRATKDIDRNRIEALGIPIVRRMTGGRAVLHADELTYSVILPEQMEGVPKTVIESYRMLTEGIRKGYHHLGIPVEFSVPMTEEEKEELRKPKSAVCFDAASYYELAVGKRKVAGSAQVRHQGVVLQHGSVPLSVDEGELFDCFLYEDETMRERMKARFAGKAVALNELAGRSVSFEEVRLAFVKGFEDALQLTFRPLEFNSTQWQEIERLAEKYRSEEWNWKR.

Residues 32–247 (GEVAPTLRFY…GFEDALQLTF (216 aa)) enclose the BPL/LPL catalytic domain. Catalysis depends on cysteine 149, which acts as the Acyl-thioester intermediate.

This sequence belongs to the octanoyltransferase LipM family. As to quaternary structure, monomer.

The enzyme catalyses octanoyl-[ACP] + L-lysyl-[protein] = N(6)-octanoyl-L-lysyl-[protein] + holo-[ACP] + H(+). The protein operates within protein modification; protein lipoylation via endogenous pathway; protein N(6)-(lipoyl)lysine from octanoyl-[acyl-carrier-protein]. In terms of biological role, catalyzes the transfer of endogenously produced octanoic acid from octanoyl-acyl-carrier-protein onto the lipoyl domain of GcvH, an intermediate carrier during protein lipoylation. The chain is Octanoyltransferase LipM from Exiguobacterium sibiricum (strain DSM 17290 / CCUG 55495 / CIP 109462 / JCM 13490 / 255-15).